The following is a 308-amino-acid chain: Putative transcription elongation factor S-II (308 aa).

A TFIIS N-terminal domain is found at 5-84 (EETQSLCKQV…KDWKNVVDGK (80 aa)). A disordered region spans residues 82–126 (DGKSKSQDDGGAPPAKKHRKESVEEAKPEKKKIEAPYKRPEPSSR). Positions 102-125 (ESVEEAKPEKKKIEAPYKRPEPSS) are enriched in basic and acidic residues. Positions 148–263 (TRLKSAQLLL…EHQMSVQQGT (116 aa)) constitute a TFIIS central domain. Residues 266 to 306 (DMFKCGKCGKKNCTYTQLQTRSSDEPMTTFVFCLECGNRWK) form a TFIIS-type zinc finger. 4 residues coordinate Zn(2+): cysteine 270, cysteine 273, cysteine 298, and cysteine 301.

The protein belongs to the TFS-II family.

It localises to the nucleus. In terms of biological role, necessary for efficient RNA polymerase II transcription elongation past template-encoded arresting sites. The arresting sites in DNA have the property of trapping a certain fraction of elongating RNA polymerases that pass through, resulting in locked ternary complexes. Cleavage of the nascent transcript by S-II allows the resumption of elongation from the new 3'-terminus. This Caenorhabditis elegans protein is Putative transcription elongation factor S-II.